We begin with the raw amino-acid sequence, 458 residues long: Chromosomal replication initiator protein DnaA (458 aa).

Residues 1–93 (MKTELSEVWQ…NVIEDPAAEP (93 aa)) form a domain I, interacts with DnaA modulators region. Residues 94-119 (VDAPNVADLPAGTSAPAAEQNARLLG) form a domain II region. The interval 120 to 336 (YINPKYTFET…GALTRVVAYA (217 aa)) is domain III, AAA+ region. The ATP site is built by Gly-164, Gly-166, Lys-167, and Thr-168. The tract at residues 337–458 (NMLKCPLTYD…EQLIARIRAE (122 aa)) is domain IV, binds dsDNA.

The protein belongs to the DnaA family. Oligomerizes as a right-handed, spiral filament on DNA at oriC.

It is found in the cytoplasm. In terms of biological role, plays an essential role in the initiation and regulation of chromosomal replication. ATP-DnaA binds to the origin of replication (oriC) to initiate formation of the DNA replication initiation complex once per cell cycle. Binds the DnaA box (a 9 base pair repeat at the origin) and separates the double-stranded (ds)DNA. Forms a right-handed helical filament on oriC DNA; dsDNA binds to the exterior of the filament while single-stranded (ss)DNA is stabiized in the filament's interior. The ATP-DnaA-oriC complex binds and stabilizes one strand of the AT-rich DNA unwinding element (DUE), permitting loading of DNA polymerase. After initiation quickly degrades to an ADP-DnaA complex that is not apt for DNA replication. Binds acidic phospholipids. In Symbiobacterium thermophilum (strain DSM 24528 / JCM 14929 / IAM 14863 / T), this protein is Chromosomal replication initiator protein DnaA.